The chain runs to 218 residues: Hypoxanthine-guanine phosphoribosyltransferase (218 aa).

Ala2 is subject to N-acetylalanine. Residue Lys69 participates in GMP binding. Position 103 is an N6-acetyllysine (Lys103). A Glycyl lysine isopeptide (Lys-Gly) (interchain with G-Cter in SUMO1); alternate cross-link involves residue Lys115. Lys115 participates in a covalent cross-link: Glycyl lysine isopeptide (Lys-Gly) (interchain with G-Cter in SUMO2); alternate. Residues 134–142 (EDIIDTGKT), Lys166, 186–188 (KFV), and Asp194 each bind GMP. Asp138 functions as the Proton acceptor in the catalytic mechanism. A Phosphothreonine modification is found at Thr142. Residue Asp194 participates in Mg(2+) binding.

This sequence belongs to the purine/pyrimidine phosphoribosyltransferase family. In terms of assembly, homotetramer. Requires Mg(2+) as cofactor.

It localises to the cytoplasm. It carries out the reaction IMP + diphosphate = hypoxanthine + 5-phospho-alpha-D-ribose 1-diphosphate. The enzyme catalyses GMP + diphosphate = guanine + 5-phospho-alpha-D-ribose 1-diphosphate. The protein operates within purine metabolism; IMP biosynthesis via salvage pathway; IMP from hypoxanthine: step 1/1. In terms of biological role, converts guanine to guanosine monophosphate, and hypoxanthine to inosine monophosphate. Transfers the 5-phosphoribosyl group from 5-phosphoribosylpyrophosphate onto the purine. Plays a central role in the generation of purine nucleotides through the purine salvage pathway. This chain is Hypoxanthine-guanine phosphoribosyltransferase (HPRT1), found in Homo sapiens (Human).